A 452-amino-acid polypeptide reads, in one-letter code: Asparagine--tRNA ligase (452 aa).

Belongs to the class-II aminoacyl-tRNA synthetase family. As to quaternary structure, homodimer.

The protein localises to the cytoplasm. The enzyme catalyses tRNA(Asn) + L-asparagine + ATP = L-asparaginyl-tRNA(Asn) + AMP + diphosphate + H(+). The chain is Asparagine--tRNA ligase from Mycoplasma mycoides subsp. mycoides SC (strain CCUG 32753 / NCTC 10114 / PG1).